The primary structure comprises 1427 residues: Protein expanded (1427 aa).

The FERM domain occupies 26–399 (RFLALRLLGQ…DTHQWSMKLA (374 aa)). The segment at 176–212 (GDAPPGTSNSKDDSGEETSASPSNGGRGLSATTTLPK) is disordered. The span at 192-211 (ETSASPSNGGRGLSATTTLP) shows a compositional bias: polar residues. Phosphotyrosine occurs at positions 227 and 423. 2 disordered regions span residues 520–566 (VRPQ…IGSQ) and 611–656 (NSAL…SGVY). A compositionally biased stretch (polar residues) spans 524 to 544 (DASSNGATIVTNSSVQRNSMG). Over residues 545–559 (TTANDSSTATDSPSS) the composition is skewed to low complexity. Phosphotyrosine is present on Tyr679. Over residues 688-710 (EETHVQHSDSVDGKKKEDFRPRS) the composition is skewed to basic and acidic residues. Disordered regions lie at residues 688 to 732 (EETH…DNKH), 766 to 792 (YVTL…YSAR), 815 to 880 (APKP…SLKS), 939 to 963 (HNSN…HRHS), and 1000 to 1022 (LAPP…HPHL). Tyr766 is modified (phosphotyrosine). Positions 818–838 (PDSPPCSPPVPPAPIPAPPPA) are enriched in pro residues. Positions 842–847 (RDPPPY) match the RXPPXY motif motif. Positions 848-859 (SISSKPRPTSLI) are enriched in polar residues. A compositionally biased stretch (low complexity) spans 860 to 877 (SVSSSAHPAPSAAGSMSS). The segment covering 951–963 (LHHHHVPSHHRHS) has biased composition (basic residues). Residues 1001–1019 (APPPPSLPRQPPPPPPPNH) are compositionally biased toward pro residues. The SH3-binding motif lies at 1008–1020 (PRQPPPPPPPNHP). Tyr1103 carries the phosphotyrosine modification. The SH3-binding signature appears at 1149–1157 (PPPPPPLHP). A Phosphoserine modification is found at Ser1181. Disordered regions lie at residues 1190–1267 (DLLP…WAGE) and 1345–1398 (TGQE…LPVQ). Composition is skewed to pro residues over residues 1214–1230 (PPMP…PSKP) and 1237–1246 (PIPPRKPPTL). Polar residues-rich tracts occupy residues 1253–1262 (SPLTKTSSGA) and 1345–1370 (TGQE…SSAG). Positions 1376–1388 (KARKGSTVSHRHP) are enriched in basic residues.

Forms a complex with Kibra and Mer. Interacts (via RXPPXY motif) with Kibra (via domain WW 1). Interacts with Mer and Hpo (via SARAH domain). Interacts with Schip1; the interaction results in recruitment of Schip1 to the apical cell membrane. Interacts with ack and yki. Phosphorylated by Ack at several tyrosines including Tyr-227, Tyr-423, Tyr-679, Tyr-766 and Tyr-1103.

The protein resides in the apical cell membrane. Its function is as follows. Activates the Hippo/SWH (Sav/Wts/Hpo) signaling pathway, a signaling pathway that plays a pivotal role in organ size control and tumor suppression by restricting proliferation and promoting apoptosis. The core of this pathway is composed of a kinase cascade wherein Hippo (Hpo), in complex with its regulatory protein Salvador (Sav), phosphorylates and activates Warts (Wts) in complex with its regulatory protein Mats, which in turn phosphorylates and inactivates the Yorkie (Yki) oncoprotein. Ex acts synergistically along with Mer and Kibra to regulate the Hippo signaling pathway. Involved in the control of cell proliferation in imaginal disks. May bind to certain proteins of signal transduction pathways by interaction with their SH3 domains. Required for apical localization of Schip1. The polypeptide is Protein expanded (ex) (Drosophila melanogaster (Fruit fly)).